The sequence spans 485 residues: Ribulose bisphosphate carboxylase large chain (485 aa).

The substrate site is built by N124 and T174. K176 serves as the catalytic Proton acceptor. K178 provides a ligand contact to substrate. Mg(2+) is bound by residues K202, D204, and E205. K202 bears the N6-carboxylysine mark. H294 serves as the catalytic Proton acceptor. Substrate-binding residues include R295, H327, and S379.

This sequence belongs to the RuBisCO large chain family. Type I subfamily. As to quaternary structure, heterohexadecamer of 8 large chains and 8 small chains. It depends on Mg(2+) as a cofactor.

The catalysed reaction is 2 (2R)-3-phosphoglycerate + 2 H(+) = D-ribulose 1,5-bisphosphate + CO2 + H2O. The enzyme catalyses D-ribulose 1,5-bisphosphate + O2 = 2-phosphoglycolate + (2R)-3-phosphoglycerate + 2 H(+). RuBisCO catalyzes two reactions: the carboxylation of D-ribulose 1,5-bisphosphate, the primary event in carbon dioxide fixation, as well as the oxidative fragmentation of the pentose substrate. Both reactions occur simultaneously and in competition at the same active site. This is Ribulose bisphosphate carboxylase large chain from Rhodopseudomonas palustris (strain ATCC BAA-98 / CGA009).